Consider the following 279-residue polypeptide: Digeranylgeranylglyceryl phosphate synthase (279 aa).

Helical transmembrane passes span 5-25 (GFFAITRPANSVVAGLAAIVA), 27-47 (LIATGTLVYGVLLLMAVVLLV), 90-110 (FLLGLAVSVFTTPLCMGIALV), 127-147 (FFGNAAVAFLSASIFLFGGAY), 148-168 (AGWHALLDMLPIAAITFLAML), 198-218 (KTALIAFACTAFAIAASAVPY), 219-239 (LWWGGWYLAGIAAVDLVILFA), and 259-279 (TLLKLGMFASLVVFTLSAVFL).

It belongs to the UbiA prenyltransferase family. DGGGP synthase subfamily. Mg(2+) is required as a cofactor.

It is found in the cell membrane. It catalyses the reaction sn-3-O-(geranylgeranyl)glycerol 1-phosphate + (2E,6E,10E)-geranylgeranyl diphosphate = 2,3-bis-O-(geranylgeranyl)-sn-glycerol 1-phosphate + diphosphate. Its pathway is membrane lipid metabolism; glycerophospholipid metabolism. In terms of biological role, prenyltransferase that catalyzes the transfer of the geranylgeranyl moiety of geranylgeranyl diphosphate (GGPP) to the C2 hydroxyl of (S)-3-O-geranylgeranylglyceryl phosphate (GGGP). This reaction is the second ether-bond-formation step in the biosynthesis of archaeal membrane lipids. The protein is Digeranylgeranylglyceryl phosphate synthase of Methanoregula boonei (strain DSM 21154 / JCM 14090 / 6A8).